The sequence spans 331 residues: ATP-dependent 6-phosphofructokinase (331 aa).

ATP is bound at residue glycine 12. ADP contacts are provided by residues 22 to 26 (RGVVR) and 55 to 60 (RYSVSD). Residues 73 to 74 (RF) and 103 to 106 (GDGS) contribute to the ATP site. Position 104 (aspartate 104) interacts with Mg(2+). 127 to 129 (TID) is a binding site for substrate. Residue aspartate 129 is the Proton acceptor of the active site. Arginine 156 is an ADP binding site. Residues arginine 164 and 171 to 173 (MGR) each bind substrate. ADP contacts are provided by residues 187–189 (GCE), lysine 213, and 215–217 (KKH). Residues glutamate 224, arginine 245, and 251–254 (HIQR) each bind substrate.

This sequence belongs to the phosphofructokinase type A (PFKA) family. ATP-dependent PFK group I subfamily. Prokaryotic clade 'B1' sub-subfamily. Homotetramer. The cofactor is Mg(2+).

The protein localises to the cytoplasm. It carries out the reaction beta-D-fructose 6-phosphate + ATP = beta-D-fructose 1,6-bisphosphate + ADP + H(+). It participates in carbohydrate degradation; glycolysis; D-glyceraldehyde 3-phosphate and glycerone phosphate from D-glucose: step 3/4. With respect to regulation, allosterically activated by ADP and other diphosphonucleosides, and allosterically inhibited by phosphoenolpyruvate. In terms of biological role, catalyzes the phosphorylation of D-fructose 6-phosphate to fructose 1,6-bisphosphate by ATP, the first committing step of glycolysis. The sequence is that of ATP-dependent 6-phosphofructokinase from Yersinia enterocolitica serotype O:8 / biotype 1B (strain NCTC 13174 / 8081).